The primary structure comprises 477 residues: Protein translocase subunit SecY (477 aa).

The next 10 membrane-spanning stretches (helical) occupy residues 28-48 (FMIS…LAII), 67-89 (FFSL…AVGI), 130-150 (IITL…ATNS), 165-185 (DFVA…VFLG), 196-216 (GITL…FIAA), 234-254 (AISF…TTFI), 286-306 (SAGV…VTIA), 329-349 (GIVL…YIQI), 387-407 (FIGA…SALI), and 413-433 (LSLG…FMSA).

Belongs to the SecY/SEC61-alpha family. Component of the Sec protein translocase complex. Heterotrimer consisting of SecY, SecE and SecG subunits. The heterotrimers can form oligomers, although 1 heterotrimer is thought to be able to translocate proteins. Interacts with the ribosome. Interacts with SecDF, and other proteins may be involved. Interacts with SecA.

The protein localises to the cell membrane. Its function is as follows. The central subunit of the protein translocation channel SecYEG. Consists of two halves formed by TMs 1-5 and 6-10. These two domains form a lateral gate at the front which open onto the bilayer between TMs 2 and 7, and are clamped together by SecE at the back. The channel is closed by both a pore ring composed of hydrophobic SecY resides and a short helix (helix 2A) on the extracellular side of the membrane which forms a plug. The plug probably moves laterally to allow the channel to open. The ring and the pore may move independently. The chain is Protein translocase subunit SecY from Mycoplasma pneumoniae (strain ATCC 29342 / M129 / Subtype 1) (Mycoplasmoides pneumoniae).